A 538-amino-acid chain; its full sequence is Putative cysteine ligase BshC (538 aa).

The stretch at 460 to 485 (KINEQIELLERMLKRNIEKKHEVELN) forms a coiled coil.

This sequence belongs to the BshC family.

Its function is as follows. Involved in bacillithiol (BSH) biosynthesis. May catalyze the last step of the pathway, the addition of cysteine to glucosamine malate (GlcN-Mal) to generate BSH. This is Putative cysteine ligase BshC from Bacillus cereus (strain Q1).